An 88-amino-acid polypeptide reads, in one-letter code: Apolipoprotein C-I (88 aa).

Residues 1-26 (MRLILSLPVLAVVLAMVLEGPAPAQA) form the signal peptide.

It belongs to the apolipoprotein C1 family.

It localises to the secreted. Its function is as follows. Inhibitor of lipoprotein binding to the low density lipoprotein (LDL) receptor, LDL receptor-related protein, and very low density lipoprotein (VLDL) receptor. Associates with high density lipoproteins (HDL) and the triacylglycerol-rich lipoproteins in the plasma and makes up about 10% of the protein of the VLDL and 2% of that of HDL. Appears to interfere directly with fatty acid uptake and is also the major plasma inhibitor of cholesteryl ester transfer protein (CETP). Binds free fatty acids and reduces their intracellular esterification. Modulates the interaction of APOE with beta-migrating VLDL and inhibits binding of beta-VLDL to the LDL receptor-related protein. This is Apolipoprotein C-I (APOC1) from Eidolon helvum (Straw-colored fruit bat).